A 456-amino-acid chain; its full sequence is Bifunctional protein GlmU (456 aa).

The segment at 1–228 is pyrophosphorylase; it reads MPQNTLNIVI…SHLAAGVNNK (228 aa). Residues 11-14, Lys25, Gln75, 80-81, 102-104, Gly138, Glu153, Asn168, and Asn226 contribute to the UDP-N-acetyl-alpha-D-glucosamine site; these read LAAG, GT, and YGD. A Mg(2+)-binding site is contributed by Asp104. Asn226 is a binding site for Mg(2+). The segment at 229–249 is linker; sequence LQLTELERIFQTEQAQELLKA. The N-acetyltransferase stretch occupies residues 250–456; it reads GVTLRDPARF…GWVRPEKDKQ (207 aa). Residues Arg332 and Lys350 each coordinate UDP-N-acetyl-alpha-D-glucosamine. Residue His362 is the Proton acceptor of the active site. Residues Tyr365 and Asn376 each contribute to the UDP-N-acetyl-alpha-D-glucosamine site. Residues Ala379, 385-386, Ser404, Ala422, and Arg439 contribute to the acetyl-CoA site; that span reads NY.

The protein in the N-terminal section; belongs to the N-acetylglucosamine-1-phosphate uridyltransferase family. This sequence in the C-terminal section; belongs to the transferase hexapeptide repeat family. Homotrimer. Mg(2+) serves as cofactor.

It localises to the cytoplasm. The catalysed reaction is alpha-D-glucosamine 1-phosphate + acetyl-CoA = N-acetyl-alpha-D-glucosamine 1-phosphate + CoA + H(+). The enzyme catalyses N-acetyl-alpha-D-glucosamine 1-phosphate + UTP + H(+) = UDP-N-acetyl-alpha-D-glucosamine + diphosphate. Its pathway is nucleotide-sugar biosynthesis; UDP-N-acetyl-alpha-D-glucosamine biosynthesis; N-acetyl-alpha-D-glucosamine 1-phosphate from alpha-D-glucosamine 6-phosphate (route II): step 2/2. It functions in the pathway nucleotide-sugar biosynthesis; UDP-N-acetyl-alpha-D-glucosamine biosynthesis; UDP-N-acetyl-alpha-D-glucosamine from N-acetyl-alpha-D-glucosamine 1-phosphate: step 1/1. The protein operates within bacterial outer membrane biogenesis; LPS lipid A biosynthesis. Catalyzes the last two sequential reactions in the de novo biosynthetic pathway for UDP-N-acetylglucosamine (UDP-GlcNAc). The C-terminal domain catalyzes the transfer of acetyl group from acetyl coenzyme A to glucosamine-1-phosphate (GlcN-1-P) to produce N-acetylglucosamine-1-phosphate (GlcNAc-1-P), which is converted into UDP-GlcNAc by the transfer of uridine 5-monophosphate (from uridine 5-triphosphate), a reaction catalyzed by the N-terminal domain. The sequence is that of Bifunctional protein GlmU from Neisseria meningitidis serogroup B (strain ATCC BAA-335 / MC58).